The chain runs to 316 residues: Annexin D5 (316 aa).

An N-acetylalanine modification is found at A2. 4 Annexin repeats span residues 11–82, 83–154, 166–238, and 242–313; these read PSPR…LWMP, EAVE…AYLN, ASVE…TILQ, and NSCF…SLLG. Residues F24, G26, G28, and E68 each contribute to the Ca(2+) site. S95 carries the phosphoserine modification. T112 is subject to Phosphothreonine. G259 lines the Ca(2+) pocket. At Y284 the chain carries Phosphotyrosine. D299 and T300 together coordinate Ca(2+).

It belongs to the annexin (TC 1.A.31.1) family. As to expression, expressed mainly in roots and flowers. Lower in stems and leaves.

This Arabidopsis thaliana (Mouse-ear cress) protein is Annexin D5 (ANN5).